The primary structure comprises 422 residues: MEDSKPLSVSEVTRIIKNLISGSKDLKNIWVRGEISNYSKASSGHIYFSLKDAGSLIRCTFFNYSNKNYSGKPLSDGKEIQVYGTITLYEAGGSYNLNVTRVEELGQGDILLQIEKLKQKLAVEGIFDPEKKRRIPSFPKTLGIATSPTGAAIEDIIKISRSRFPGINILIAPCIVQGEDAPDSIVAAIEELNHPNWKVDVIIAGRGGGSFEDLMAFNDEKVVRAYANSRIPIISAVGHQTDVLLSDFAADHFTPTPTAAAEYAIPKEEDVLQFLSQLEGRIKSSLVTKISSNRDRLRLLSGKFIFKEPMQLLNQRSQRVDEIGIRLQKALSNKLNLARVRLERYQNLTSRIQNILFHKKQKAEFWTSKVEDLSPAATMKRGYSILRNENGKIIRSPEETKPEEELQVLLSGGTMQVIRKGK.

The protein belongs to the XseA family. In terms of assembly, heterooligomer composed of large and small subunits.

The protein localises to the cytoplasm. It carries out the reaction Exonucleolytic cleavage in either 5'- to 3'- or 3'- to 5'-direction to yield nucleoside 5'-phosphates.. Its function is as follows. Bidirectionally degrades single-stranded DNA into large acid-insoluble oligonucleotides, which are then degraded further into small acid-soluble oligonucleotides. The protein is Exodeoxyribonuclease 7 large subunit of Leptospira interrogans serogroup Icterohaemorrhagiae serovar copenhageni (strain Fiocruz L1-130).